The primary structure comprises 403 residues: G2/mitotic-specific cyclin-B1 (403 aa).

Belongs to the cyclin family. Cyclin AB subfamily. As to quaternary structure, interacts with the CDC2 protein kinase to form a serine/threonine kinase holoenzyme complex also known as maturation promoting factor (MPF). The cyclin subunit imparts substrate specificity to the complex.

Essential for the control of the cell cycle at the G2/M (mitosis) transition. This is G2/mitotic-specific cyclin-B1 (ccnb1) from Anguilla japonica (Japanese eel).